Here is a 729-residue protein sequence, read N- to C-terminus: MLYKGDTLYLDWLEDGIAELVFDTPGSVNKLDTATVASLGEAIGVLEQQSDLKGLLLRSNKAAFIVGADITEFLSLFLVPEEQLSQWLHFANSVFNRLEDLPVPTIAAVNGYALGGGCECVLATDYRLATPDLRIGLPETKLGIMPGFGGSVRMPRMLGADSALEIIAAGKDVGADQALKIGLVDGVVKAEKLVEGAIAILRQAINGDLDWKAKRQPKLEPLKLSKIEAAMSFTIAKGMVAQTAGKHYPAPITAVKTIEAAARFGREEALNLENKSFVPLAHTNEARALVGIFLNDQYVKGKAKKLTKDVETPKQAAVLGAGIMGGGIAYQSAWKGVPVVMKDINDKSLTLGMTEAAKLLNKQLERGKIDGLKLAGVISTIHPTLDYAGFDRVDVVVEAVVENPKVKKAVLAETEQKVRPDTVLASNTSTIPISELANALERPENFCGMHFFNPVHRMPLVEIIRGEKSSDETIAKVVAWASKMGKTPIVVNDCPGFFVNRVLFPYFAGFSQLLRDGAGFRKIDKVMEKQFGWPMGPAYLLDVVGIDTAHHAQAVMAAGFPQRMQKDYRDAIDALFDANRFGQKNGLGFWRYKEDSKGKPKKEEDVVVDDLLAKVSQPKRDFSEEEIIARMMIPMVNEVVRCLEEGIIATPAEADMALVYGLGFPPFHGGAFRWLDTLGSAKYLDMAQQYQHLGPLYEVPEGLRNKARHNEPYYPPVEPARPVGDLKTA.

The segment at 1 to 189 is enoyl-CoA hydratase/isomerase; it reads MLYKGDTLYL…KIGLVDGVVK (189 aa). Aspartate 296 contacts substrate. Residues 311 to 729 are 3-hydroxyacyl-CoA dehydrogenase; sequence ETPKQAAVLG…ARPVGDLKTA (419 aa). NAD(+) contacts are provided by residues methionine 324, aspartate 343, 400 to 402, lysine 407, and serine 429; that span reads VVE. The active-site For 3-hydroxyacyl-CoA dehydrogenase activity is histidine 450. Asparagine 453 is a binding site for NAD(+). Substrate-binding residues include asparagine 500 and tyrosine 660. The interval 708 to 729 is disordered; the sequence is RHNEPYYPPVEPARPVGDLKTA.

It in the N-terminal section; belongs to the enoyl-CoA hydratase/isomerase family. In the C-terminal section; belongs to the 3-hydroxyacyl-CoA dehydrogenase family. As to quaternary structure, heterotetramer of two alpha chains (FadB) and two beta chains (FadA).

The catalysed reaction is a (3S)-3-hydroxyacyl-CoA + NAD(+) = a 3-oxoacyl-CoA + NADH + H(+). It carries out the reaction a (3S)-3-hydroxyacyl-CoA = a (2E)-enoyl-CoA + H2O. The enzyme catalyses a 4-saturated-(3S)-3-hydroxyacyl-CoA = a (3E)-enoyl-CoA + H2O. It catalyses the reaction (3S)-3-hydroxybutanoyl-CoA = (3R)-3-hydroxybutanoyl-CoA. The catalysed reaction is a (3Z)-enoyl-CoA = a 4-saturated (2E)-enoyl-CoA. It carries out the reaction a (3E)-enoyl-CoA = a 4-saturated (2E)-enoyl-CoA. It participates in lipid metabolism; fatty acid beta-oxidation. Functionally, involved in the aerobic and anaerobic degradation of long-chain fatty acids via beta-oxidation cycle. Catalyzes the formation of 3-oxoacyl-CoA from enoyl-CoA via L-3-hydroxyacyl-CoA. It can also use D-3-hydroxyacyl-CoA and cis-3-enoyl-CoA as substrate. This Escherichia coli (strain UTI89 / UPEC) protein is Fatty acid oxidation complex subunit alpha.